The primary structure comprises 510 residues: D-alanine--D-alanyl carrier protein ligase (510 aa).

Position 157-158 (157-158 (TS)) interacts with ATP. Asp-202 contacts D-alanine. ATP is bound at residue 297–302 (NTYGPT). Val-306 serves as a coordination point for D-alanine. ATP contacts are provided by Asp-389 and Lys-498. Lys-498 serves as a coordination point for D-alanine.

It belongs to the ATP-dependent AMP-binding enzyme family. DltA subfamily.

It localises to the cytoplasm. The catalysed reaction is holo-[D-alanyl-carrier protein] + D-alanine + ATP = D-alanyl-[D-alanyl-carrier protein] + AMP + diphosphate. Its pathway is cell wall biogenesis; lipoteichoic acid biosynthesis. Functionally, catalyzes the first step in the D-alanylation of lipoteichoic acid (LTA), the activation of D-alanine and its transfer onto the D-alanyl carrier protein (Dcp) DltC. In an ATP-dependent two-step reaction, forms a high energy D-alanyl-AMP intermediate, followed by transfer of the D-alanyl residue as a thiol ester to the phosphopantheinyl prosthetic group of the Dcp. D-alanylation of LTA plays an important role in modulating the properties of the cell wall in Gram-positive bacteria, influencing the net charge of the cell wall. In Listeria monocytogenes serotype 4b (strain CLIP80459), this protein is D-alanine--D-alanyl carrier protein ligase.